Reading from the N-terminus, the 351-residue chain is D-alanine--D-alanine ligase (351 aa).

The region spanning 141–349 (KAAFSAAGLP…ISQLVARLIE (209 aa)) is the ATP-grasp domain. 176–231 (ETQLGYPCFIKPANLGSSVGISKAYDKKELLNGLDLAAQLDSRIVVEKNIKARELE) is an ATP binding site. 3 residues coordinate Mg(2+): aspartate 302, glutamate 316, and asparagine 318.

It belongs to the D-alanine--D-alanine ligase family. Mg(2+) serves as cofactor. The cofactor is Mn(2+).

It is found in the cytoplasm. It catalyses the reaction 2 D-alanine + ATP = D-alanyl-D-alanine + ADP + phosphate + H(+). It functions in the pathway cell wall biogenesis; peptidoglycan biosynthesis. Cell wall formation. The chain is D-alanine--D-alanine ligase from Prochlorococcus marinus (strain SARG / CCMP1375 / SS120).